We begin with the raw amino-acid sequence, 275 residues long: Ribosomal protein L11 methyltransferase (275 aa).

Positions 123, 146, 167, and 208 each coordinate S-adenosyl-L-methionine.

Belongs to the methyltransferase superfamily. PrmA family.

Its subcellular location is the cytoplasm. The catalysed reaction is L-lysyl-[protein] + 3 S-adenosyl-L-methionine = N(6),N(6),N(6)-trimethyl-L-lysyl-[protein] + 3 S-adenosyl-L-homocysteine + 3 H(+). Methylates ribosomal protein L11. The chain is Ribosomal protein L11 methyltransferase from Campylobacter fetus subsp. fetus (strain 82-40).